The following is a 467-amino-acid chain: Proton extrusion protein PxcA (467 aa).

The tract at residues 183–205 (TSPPQLIRPRTEQNKKPRGKADT) is disordered. Residues 191-203 (PRTEQNKKPRGKA) are compositionally biased toward basic and acidic residues. The next 4 helical transmembrane spans lie at 249–269 (FILLLIIVPLLTHQLSKALIV), 352–372 (IFSVGAFIWLLLVSKPSIMVL), 391–411 (IIILFTDVFVGFHSPHGWEVI), and 427–447 (FIFLFIATFPVILDTIFKYWI).

The protein belongs to the CemA family.

It is found in the cell inner membrane. Functionally, required for H(+) efflux immediately after light irradiation to form a rapid H(+) concentration gradient across the thylakoid membranes. Together with PxcL, contributes to transient H(+) uptake following dark to light transition. In Trichormus variabilis (strain ATCC 29413 / PCC 7937) (Anabaena variabilis), this protein is Proton extrusion protein PxcA.